The following is a 347-amino-acid chain: Syntaxin-32 (347 aa).

Topologically, residues 1–325 (MSARHGQSSY…RYLNSISSNR (325 aa)) are cytoplasmic. Disordered regions lie at residues 172–191 (HESRRQLFSSNASKESTNPF) and 208–251 (PLPW…QQMV). 2 stretches are compositionally biased toward polar residues: residues 177–191 (QLFSSNASKESTNPF) and 213–222 (NGSSSSSSQL). The span at 237-249 (QQSQQQQQQQQQQ) shows a compositional bias: low complexity. The t-SNARE coiled-coil homology domain occupies 255 to 317 (DTYMQGRAEA…EGAQSQLARY (63 aa)). Residues 326–346 (WLMMKIFFVLIAFLMIFLFFV) traverse the membrane as a helical; Anchor for type IV membrane protein segment. A topological domain (vesicular) is located at residue alanine 347.

Belongs to the syntaxin family. Part of the t-SNARE complex.

It localises to the golgi apparatus. The protein resides in the cis-Golgi network membrane. Its function is as follows. Vesicle trafficking protein that functions in the secretory pathway. This Arabidopsis thaliana (Mouse-ear cress) protein is Syntaxin-32 (SYP32).